Here is a 782-residue protein sequence, read N- to C-terminus: U-box domain-containing protein 7 (782 aa).

Residues 271–345 (VPPEELRCPI…ASWCEQNGTQ (75 aa)) form the U-box domain. ARM repeat units lie at residues 456–499 (EEAR…NLAV), 502–541 (NRNK…SCLD), 542–581 (EAKS…NLST), 583–623 (SPNI…NLAS), and 626–665 (EGKD…ILCN). Basic and acidic residues predominate over residues 707 to 729 (EERQQRDQPSSNRDEPPQKEPAR). The interval 707–765 (EERQQRDQPSSNRDEPPQKEPARKSLSAPLSVHGSTPASASVQDYEPRVLSKSMSRRKS) is disordered. Positions 739–748 (HGSTPASASV) are enriched in polar residues.

The catalysed reaction is S-ubiquitinyl-[E2 ubiquitin-conjugating enzyme]-L-cysteine + [acceptor protein]-L-lysine = [E2 ubiquitin-conjugating enzyme]-L-cysteine + N(6)-ubiquitinyl-[acceptor protein]-L-lysine.. The protein operates within protein modification; protein ubiquitination. Functions as an E3 ubiquitin ligase. This chain is U-box domain-containing protein 7 (PUB7), found in Arabidopsis thaliana (Mouse-ear cress).